The following is a 277-amino-acid chain: Thymidylate synthase (277 aa).

Position 27 (Arg27) interacts with dUMP. His57 lines the (6R)-5,10-methylene-5,6,7,8-tetrahydrofolate pocket. 132–133 is a binding site for dUMP; the sequence is RR. Residue Cys152 is the Nucleophile of the active site. DUMP-binding positions include 179-182, Asn190, and 220-222; these read RSAD and HIY. Residue Asp182 participates in (6R)-5,10-methylene-5,6,7,8-tetrahydrofolate binding. Ala276 lines the (6R)-5,10-methylene-5,6,7,8-tetrahydrofolate pocket.

Belongs to the thymidylate synthase family. Bacterial-type ThyA subfamily. In terms of assembly, homodimer.

The protein resides in the cytoplasm. The enzyme catalyses dUMP + (6R)-5,10-methylene-5,6,7,8-tetrahydrofolate = 7,8-dihydrofolate + dTMP. Its pathway is pyrimidine metabolism; dTTP biosynthesis. Catalyzes the reductive methylation of 2'-deoxyuridine-5'-monophosphate (dUMP) to 2'-deoxythymidine-5'-monophosphate (dTMP) while utilizing 5,10-methylenetetrahydrofolate (mTHF) as the methyl donor and reductant in the reaction, yielding dihydrofolate (DHF) as a by-product. This enzymatic reaction provides an intracellular de novo source of dTMP, an essential precursor for DNA biosynthesis. This is Thymidylate synthase from Acidovorax sp. (strain JS42).